The primary structure comprises 753 residues: Catalase-peroxidase (753 aa).

The first 39 residues, methionine 1–alanine 39, serve as a signal peptide directing secretion. A cross-link (tryptophyl-tyrosyl-methioninium (Trp-Tyr) (with M-267)) is located at residues tryptophan 118 to tyrosine 241. Histidine 119 acts as the Proton acceptor in catalysis. Positions tyrosine 241 to methionine 267 form a cross-link, tryptophyl-tyrosyl-methioninium (Tyr-Met) (with W-118). Position 282 (histidine 282) interacts with heme b.

Belongs to the peroxidase family. Peroxidase/catalase subfamily. Homodimer or homotetramer. Heme b serves as cofactor. Formation of the three residue Trp-Tyr-Met cross-link is important for the catalase, but not the peroxidase activity of the enzyme.

The enzyme catalyses H2O2 + AH2 = A + 2 H2O. It catalyses the reaction 2 H2O2 = O2 + 2 H2O. In terms of biological role, bifunctional enzyme with both catalase and broad-spectrum peroxidase activity. The chain is Catalase-peroxidase from Pseudoalteromonas atlantica (strain T6c / ATCC BAA-1087).